A 196-amino-acid polypeptide reads, in one-letter code: Rho-related protein racA (196 aa).

Positions 13, 15, 16, 17, 18, 32, 35, 60, 116, 118, and 159 each coordinate GTP. Residue threonine 17 participates in Mg(2+) binding. 2 consecutive short sequence motifs (switch) follow at residues asparagine 26–phenylalanine 37 and aspartate 57–threonine 75. Residue threonine 35 coordinates Mg(2+). At cysteine 193 the chain carries Cysteine methyl ester. Cysteine 193 carries the S-geranylgeranyl cysteine lipid modification. Positions leucine 194–phenylalanine 196 are cleaved as a propeptide — removed in mature form.

Belongs to the small GTPase superfamily. Rho family. In terms of assembly, interacts (GTP-bound form) with PAK2 (via CRIB domain). The cofactor is Mg(2+).

It localises to the cell membrane. The protein resides in the cytoplasm. The protein localises to the cytoskeleton. The enzyme catalyses GTP + H2O = GDP + phosphate + H(+). Its activity is regulated as follows. Regulated by guanine nucleotide exchange factors (GEFs) which promote the exchange of bound GDP for free GTP, GTPase activating proteins (GAPs) which increase the GTP hydrolysis activity, and GDP dissociation inhibitors which inhibit the dissociation of the nucleotide from the GTPase. Functionally, small GTPase which cycles between active GTP-bound and inactive GDP-bound states. Involved in cytoskeleton remodeling. Plays a role in phagocytosis of bacteria and host erythrocytes. Involved in capping of surface receptors. May be involved in cytokinesis. This Entamoeba histolytica (strain ATCC 30459 / HM-1:IMSS / ABRM) protein is Rho-related protein racA.